Here is a 157-residue protein sequence, read N- to C-terminus: uncharacterized protein (157 aa).

Positions 1 to 23 (MEALRRAHEATLRLLLCRPWASG) are cleaved as a signal peptide.

The protein resides in the secreted. This is an uncharacterized protein from Mus musculus (Mouse).